The sequence spans 492 residues: MKKAILSVSNKTGIVEFAKALTQLNYELYSTGGTKRILDEANVPVRSVSDLTHFPEIMDGRVKTLHPAVHGGILADRNKPQHLNELSEQHIDLIDMVVVNLYPFQQTVANPDVTMDEAIENIDIGGPTMLRAAAKNYKHVTTIVHPADYQEVLTLLRNDSLDESYRQSLMIKVFEHTAEYDEAIVRFFKGDKETLRYGENPQQSAYFVRTSNAKHTIAGAKQLHGKQLSYNNIKDADATLALVKKFDTPATVAVKHMNPCGVGIGDTIEQAFQHAYEADSQSIFGGIVALNRAVTPELAEQLHSIFLEVIIAPKFTDEALDILKQKKNVRLLEIDMTIDSNEEEFVSVSGGYLVQDKDNYVVPKEEMKVVTEVAPTDEQWEAMLLGWKVVPSVKSNAIILSNNKQTVGIGAGQMNRVGAAKIALERAIEINDHVALVSDGFFPMGDTVELAAQHGIKAIIQPGGSIKDQDSIDMANKHGIAMVVTGTRHFKH.

Residues Met1–Val144 form the MGS-like domain.

This sequence belongs to the PurH family.

It carries out the reaction (6R)-10-formyltetrahydrofolate + 5-amino-1-(5-phospho-beta-D-ribosyl)imidazole-4-carboxamide = 5-formamido-1-(5-phospho-D-ribosyl)imidazole-4-carboxamide + (6S)-5,6,7,8-tetrahydrofolate. It catalyses the reaction IMP + H2O = 5-formamido-1-(5-phospho-D-ribosyl)imidazole-4-carboxamide. It participates in purine metabolism; IMP biosynthesis via de novo pathway; 5-formamido-1-(5-phospho-D-ribosyl)imidazole-4-carboxamide from 5-amino-1-(5-phospho-D-ribosyl)imidazole-4-carboxamide (10-formyl THF route): step 1/1. Its pathway is purine metabolism; IMP biosynthesis via de novo pathway; IMP from 5-formamido-1-(5-phospho-D-ribosyl)imidazole-4-carboxamide: step 1/1. This chain is Bifunctional purine biosynthesis protein PurH, found in Staphylococcus aureus (strain Newman).